The chain runs to 444 residues: Divalent metal cation transporter MntH (444 aa).

11 helical membrane-spanning segments follow: residues 31-51, 68-88, 115-135, 146-166, 175-195, 212-232, 267-287, 303-323, 356-376, 381-401, and 413-433; these read GGHW…VSVG, FGYL…VLQG, LALW…EVIG, IPLT…LLLM, AFVM…IALA, VVTN…TVMP, VALM…AAVF, ALLA…VALL, LLTR…YGEA, LLVL…IPLV, and LVAP…IVGL.

The protein belongs to the NRAMP family.

Its subcellular location is the cell inner membrane. H(+)-stimulated, divalent metal cation uptake system. The sequence is that of Divalent metal cation transporter MntH from Xanthomonas campestris pv. campestris (strain ATCC 33913 / DSM 3586 / NCPPB 528 / LMG 568 / P 25).